Reading from the N-terminus, the 511-residue chain is 2-isopropylmalate synthase (511 aa).

Positions 6–269 constitute a Pyruvate carboxyltransferase domain; sequence IIIFDTTLRD…YTDIKCENIF (264 aa). 4 residues coordinate Mn(2+): Asp15, His203, His205, and Asn239. A regulatory domain region spans residues 394–511; sequence VIEKLSVISG…SLKVEERKMA (118 aa).

The protein belongs to the alpha-IPM synthase/homocitrate synthase family. LeuA type 1 subfamily. In terms of assembly, homodimer. Requires Mn(2+) as cofactor.

The protein resides in the cytoplasm. The enzyme catalyses 3-methyl-2-oxobutanoate + acetyl-CoA + H2O = (2S)-2-isopropylmalate + CoA + H(+). Its pathway is amino-acid biosynthesis; L-leucine biosynthesis; L-leucine from 3-methyl-2-oxobutanoate: step 1/4. In terms of biological role, catalyzes the condensation of the acetyl group of acetyl-CoA with 3-methyl-2-oxobutanoate (2-ketoisovalerate) to form 3-carboxy-3-hydroxy-4-methylpentanoate (2-isopropylmalate). The chain is 2-isopropylmalate synthase from Campylobacter jejuni subsp. jejuni serotype O:23/36 (strain 81-176).